The chain runs to 132 residues: Small ribosomal subunit protein uS8 (132 aa).

It belongs to the universal ribosomal protein uS8 family. Part of the 30S ribosomal subunit. Contacts proteins S5 and S12.

Its function is as follows. One of the primary rRNA binding proteins, it binds directly to 16S rRNA central domain where it helps coordinate assembly of the platform of the 30S subunit. The polypeptide is Small ribosomal subunit protein uS8 (Borrelia turicatae (strain 91E135)).